The chain runs to 498 residues: tRNA-guanine(15) transglycosylase (498 aa).

Asp-85 acts as the Nucleophile in catalysis. Residue Asp-120 participates in substrate binding. Cys-275, Cys-277, and Cys-280 together coordinate Zn(2+).

Belongs to the archaeosine tRNA-ribosyltransferase family. It depends on Zn(2+) as a cofactor.

The enzyme catalyses guanosine(15) in tRNA + 7-cyano-7-deazaguanine = 7-cyano-7-carbaguanosine(15) in tRNA + guanine. It functions in the pathway tRNA modification; archaeosine-tRNA biosynthesis. Functionally, exchanges the guanine residue with 7-cyano-7-deazaguanine (preQ0) at position 15 in the dihydrouridine loop (D-loop) of archaeal tRNAs. The protein is tRNA-guanine(15) transglycosylase of Sulfolobus acidocaldarius (strain ATCC 33909 / DSM 639 / JCM 8929 / NBRC 15157 / NCIMB 11770).